The primary structure comprises 120 residues: Ribosome-binding factor A (120 aa).

The protein belongs to the RbfA family. In terms of assembly, monomer. Binds 30S ribosomal subunits, but not 50S ribosomal subunits or 70S ribosomes.

The protein resides in the cytoplasm. One of several proteins that assist in the late maturation steps of the functional core of the 30S ribosomal subunit. Associates with free 30S ribosomal subunits (but not with 30S subunits that are part of 70S ribosomes or polysomes). Required for efficient processing of 16S rRNA. May interact with the 5'-terminal helix region of 16S rRNA. This Chlamydia abortus (strain DSM 27085 / S26/3) (Chlamydophila abortus) protein is Ribosome-binding factor A.